The primary structure comprises 621 residues: MTQEKKKFDAEVGKILNLMIHSLYSNKEIFMRELISNASDACDKLRYLSQSNSELISGDSNFKIIVKVDKDNEQIIIRDNGIGMNKEDLIENLGTIARSGTANFLKNLSGDSKKDNMLIGQFGVGFYSSFMVADKVTVTSRKAGENKVYTWESDGLGEYIVADSEQEFARGTEIVLYIKKAETTFLDHFRLKHIVKSYSDHIAVPIYFCDEASNNEIQLNSASALWTRPKSEITEEQYKEFYKSLSYSVDDPWVTLHNKNEGAIEFTNLLFIPSSKTFDLFHPDRKRRVKLYIKRVFISDENIDLIPSYLRFLRGVVDSEDLPLNISRESLQHNNVLEKIKNAITKRVLGELRKKKEELPEEYNKFWTNFGGALKEGLCEATTDHEKLLEVCIFRSALHNKMISIDEYIANFKEGQNTIYYLSGDNPDKLLSSPQIEGLLNKNIDVLLFTDTVDDFWVNVNSEYKGYAIKSATRSDIDVEHTTSRPQDKNTDSKKSDDEYKLLTDYFKEILGELVKEVKISKKLTLSPACLAVSDTAMDIRMERFLIEQKQIASASAKNLELNPKNKIIEKIFNDLKANNKNNEELVNLIFDQACILEGEPIADTGAFSKRLNDILQKAIL.

The tract at residues 1–328 (MTQEKKKFDA…SEDLPLNISR (328 aa)) is a; substrate-binding. Residues 329–544 (ESLQHNNVLE…DTAMDIRMER (216 aa)) form a b region. The c stretch occupies residues 545–621 (FLIEQKQIAS…LNDILQKAIL (77 aa)).

This sequence belongs to the heat shock protein 90 family. In terms of assembly, homodimer.

The protein resides in the cytoplasm. Molecular chaperone. Has ATPase activity. The protein is Chaperone protein HtpG of Rickettsia typhi (strain ATCC VR-144 / Wilmington).